We begin with the raw amino-acid sequence, 457 residues long: Carboxypeptidase N catalytic chain (457 aa).

Positions 1 to 23 (MPDLPSAFLPLLLLSKFVTPVTF) are cleaved as a signal peptide. The Peptidase M14 domain occupies 24–338 (RHHRYDDLVR…EALIQFLEQV (315 aa)). An intrachain disulfide couples Cys-42 to Cys-104. Zn(2+)-binding residues include His-86, Glu-89, and His-216. Cys-271 and Cys-311 are disulfide-bonded. The active-site Proton donor/acceptor is the Glu-308. 3 O-linked (GalNAc...) threonine glycosylation sites follow: Thr-400, Thr-402, and Thr-409. A disordered region spans residues 418-457 (SSSQVYPVQRAPGRGQGGRAKQPRTSRKKDPATKRHRGPA).

The protein belongs to the peptidase M14 family. As to quaternary structure, tetramer of two catalytic chains and two glycosylated inactive chains. Zn(2+) serves as cofactor. As to expression, mainly expressed in liver. Also detected in lung, stomach, intestine, spleen and kidney.

It localises to the secreted. The protein resides in the extracellular space. The catalysed reaction is Release of a C-terminal basic amino acid, preferentially lysine.. Its function is as follows. Protects the body from potent vasoactive and inflammatory peptides containing C-terminal Arg or Lys (such as kinins or anaphylatoxins) which are released into the circulation. This is Carboxypeptidase N catalytic chain (Cpn1) from Mus musculus (Mouse).